Consider the following 1529-residue polypeptide: MRGVGWQMLSLSLGLVLAILNKVAPQACPAQCSCSGSTVDCHGLALRSVPRNIPRNTERLDLNGNNITRITKTDFAGLRHLRVLQLMENKISTIERGAFQDLKELERLRLNRNHLQLFPELLFLGTAKLYRLDLSENQIQAIPRKAFRGAVDIKNLQLDYNQISCIEDGAFRALRDLEVLTLNNNNITRLSVASFNHMPKLRTFRLHSNNLYCDCHLAWLSDWLRQRPRVGLYTQCMGPSHLRGHNVAEVQKREFVCSGHQSFMAPSCSVLHCPAACTCSNNIVDCRGKGLTEIPTNLPETITEIRLEQNTIKVIPPGAFSPYKKLRRIDLSNNQISELAPDAFQGLRSLNSLVLYGNKITELPKSLFEGLFSLQLLLLNANKINCLRVDAFQDLHNLNLLSLYDNKLQTIAKGTFSPLRAIQTMHLAQNPFICDCHLKWLADYLHTNPIETSGARCTSPRRLANKRIGQIKSKKFRCSAKEQYFIPGTEDYRSKLSGDCFADLACPEKCRCEGTTVDCSNQKLNKIPEHIPQYTAELRLNNNEFTVLEATGIFKKLPQLRKINFSNNKITDIEEGAFEGASGVNEILLTSNRLENVQHKMFKGLESLKTLMLRSNRITCVGNDSFIGLSSVRLLSLYDNQITTVAPGAFDTLHSLSTLNLLANPFNCNCYLAWLGEWLRKKRIVTGNPRCQKPYFLKEIPIQDVAIQDFTCDDGNDDNSCSPLSRCPTECTCLDTVVRCSNKGLKVLPKGIPRDVTELYLDGNQFTLVPKELSNYKHLTLIDLSNNRISTLSNQSFSNMTQLLTLILSYNRLRCIPPRTFDGLKSLRLLSLHGNDISVVPEGAFNDLSALSHLAIGANPLYCDCNMQWLSDWVKSEYKEPGIARCAGPGEMADKLLLTTPSKKFTCQGPVDVNILAKCNPCLSNPCKNDGTCNSDPVDFYRCTCPYGFKGQDCDVPIHACISNPCKHGGTCHLKEGEEDGFWCICADGFEGENCEVNVDDCEDNDCENNSTCVDGINNYTCLCPPEYTGELCEEKLDFCAQDLNPCQHDSKCILTPKGFKCDCTPGYVGEHCDIDFDDCQDNKCKNGAHCTDAVNGYTCICPEGYSGLFCEFSPPMVLPRTSPCDNFDCQNGAQCIVRINEPICQCLPGYQGEKCEKLVSVNFINKESYLQIPSAKVRPQTNITLQIATDEDSGILLYKGDKDHIAVELYRGRVRASYDTGSHPASAIYSVETINDGNFHIVELLALDQSLSLSVDGGNPKIITNLSKQSTLNFDSPLYVGGMPGKSNVASLRQAPGQNGTSFHGCIRNLYINSELQDFQKVPMQTGILPGCEPCHKKVCAHGTCQPSSQAGFTCECQEGWMGPLCDQRTNDPCLGNKCVHGTCLPINAFSYSCKCLEGHGGVLCDEEEDLFNPCQAIKCKHGKCRLSGLGQPYCECSSGYTGDSCDREISCRGERIRDYYQKQQGYAACQTTKKVSRLECRGGCAGGQCCGPLRSKRRKYSFECTDGSSFVDEVEKVVKCGCTRCVS.

A signal peptide spans 1 to 30 (MRGVGWQMLSLSLGLVLAILNKVAPQACPA). The 25-residue stretch at 31-55 (QCSCSGSTVDCHGLALRSVPRNIPR) folds into the LRRNT domain. LRR repeat units follow at residues 56–77 (NTERLDLNGNNITRITKTDFAG), 80–101 (HLRVLQLMENKISTIERGAFQD), 104–125 (ELERLRLNRNHLQLFPELLFLG), 128–149 (KLYRLDLSENQIQAIPRKAFRG), 152–173 (DIKNLQLDYNQISCIEDGAFRA), and 176–197 (DLEVLTLNNNNITRLSVASFNH). N-linked (GlcNAc...) asparagine glycosylation is present at asparagine 66. N-linked (GlcNAc...) asparagine glycosylation occurs at asparagine 186. One can recognise an LRRCT 1 domain in the interval 209–259 (NNLYCDCHLAWLSDWLRQRPRVGLYTQCMGPSHLRGHNVAEVQKREFVCSG). An LRRNT 2 domain is found at 264 to 300 (MAPSCSVLHCPAACTCSNNIVDCRGKGLTEIPTNLPE). A disulfide bridge connects residues cysteine 277 and cysteine 286. LRR repeat units lie at residues 301 to 322 (TITEIRLEQNTIKVIPPGAFSP), 325 to 346 (KLRRIDLSNNQISELAPDAFQG), 349 to 370 (SLNSLVLYGNKITELPKSLFEG), 373 to 394 (SLQLLLLNANKINCLRVDAFQD), and 397 to 418 (NLNLLSLYDNKLQTIAKGTFSP). One can recognise an LRRCT 2 domain in the interval 430-480 (NPFICDCHLKWLADYLHTNPIETSGARCTSPRRLANKRIGQIKSKKFRCSA). Disulfide bonds link cysteine 434-cysteine 457, cysteine 436-cysteine 478, cysteine 506-cysteine 512, and cysteine 510-cysteine 519. Residues 497-533 (SGDCFADLACPEKCRCEGTTVDCSNQKLNKIPEHIPQ) enclose the LRRNT 3 domain. LRR repeat units lie at residues 534–555 (YTAELRLNNNEFTVLEATGIFK), 559–580 (QLRKINFSNNKITDIEEGAFEG), 583–604 (GVNEILLTSNRLENVQHKMFKG), 607–628 (SLKTLMLRSNRITCVGNDSFIG), and 631–652 (SVRLLSLYDNQITTVAPGAFDT). Asparagine 564 carries an N-linked (GlcNAc...) asparagine glycan. Asparagine 623 is a glycosylation site (N-linked (GlcNAc...) asparagine). The region spanning 664 to 714 (NPFNCNCYLAWLGEWLRKKRIVTGNPRCQKPYFLKEIPIQDVAIQDFTCDD) is the LRRCT 3 domain. Cystine bridges form between cysteine 668/cysteine 691, cysteine 670/cysteine 712, cysteine 727/cysteine 733, and cysteine 731/cysteine 740. The region spanning 718–754 (DNSCSPLSRCPTECTCLDTVVRCSNKGLKVLPKGIPR) is the LRRNT 4 domain. LRR repeat units lie at residues 755 to 777 (DVTELYLDGNQFTLVPKELSNYK), 778 to 799 (HLTLIDLSNNRISTLSNQSFSN), 802 to 823 (QLLTLILSYNRLRCIPPRTFDG), and 826 to 847 (SLRLLSLHGNDISVVPEGAFND). N-linked (GlcNAc...) asparagine glycans are attached at residues asparagine 794 and asparagine 799. Positions 859–909 (NPLYCDCNMQWLSDWVKSEYKEPGIARCAGPGEMADKLLLTTPSKKFTCQG) constitute an LRRCT 4 domain. Disulfide bonds link cysteine 863-cysteine 886, cysteine 865-cysteine 907, cysteine 922-cysteine 933, cysteine 927-cysteine 943, cysteine 945-cysteine 954, cysteine 961-cysteine 972, cysteine 966-cysteine 984, cysteine 986-cysteine 995, cysteine 1002-cysteine 1013, cysteine 1007-cysteine 1022, cysteine 1024-cysteine 1033, cysteine 1040-cysteine 1053, cysteine 1047-cysteine 1062, cysteine 1064-cysteine 1073, cysteine 1080-cysteine 1091, cysteine 1085-cysteine 1100, cysteine 1102-cysteine 1111, cysteine 1125-cysteine 1136, cysteine 1130-cysteine 1145, and cysteine 1147-cysteine 1156. 2 EGF-like domains span residues 918 to 955 (KCNPCLSNPCKNDGTCNSDPVDFYRCTCPYGFKGQDCD) and 957 to 996 (PIHACISNPCKHGGTCHLKEGEEDGFWCICADGFEGENCE). Residues 998-1034 (NVDDCEDNDCENNSTCVDGINNYTCLCPPEYTGELCE) form the EGF-like 3; calcium-binding domain. Asparagine 1009, asparagine 1010, and asparagine 1019 each carry an N-linked (GlcNAc...) asparagine glycan. The region spanning 1036-1074 (KLDFCAQDLNPCQHDSKCILTPKGFKCDCTPGYVGEHCD) is the EGF-like 4 domain. The EGF-like 5; calcium-binding domain occupies 1076–1112 (DFDDCQDNKCKNGAHCTDAVNGYTCICPEGYSGLFCE). The EGF-like 6 domain maps to 1121–1157 (RTSPCDNFDCQNGAQCIVRINEPICQCLPGYQGEKCE). One can recognise a Laminin G-like domain in the interval 1160-1333 (VSVNFINKES…PMQTGILPGC (174 aa)). 3 N-linked (GlcNAc...) asparagine glycosylation sites follow: asparagine 1183, asparagine 1266, and asparagine 1300. Cystine bridges form between cysteine 1307/cysteine 1333, cysteine 1336/cysteine 1346, cysteine 1341/cysteine 1356, cysteine 1358/cysteine 1367, cysteine 1375/cysteine 1385, cysteine 1380/cysteine 1395, cysteine 1397/cysteine 1406, cysteine 1416/cysteine 1426, cysteine 1421/cysteine 1436, cysteine 1438/cysteine 1447, cysteine 1453/cysteine 1492, cysteine 1471/cysteine 1506, cysteine 1482/cysteine 1522, and cysteine 1486/cysteine 1524. Positions 1332–1368 (GCEPCHKKVCAHGTCQPSSQAGFTCECQEGWMGPLCD) constitute an EGF-like 7 domain. The CTCK domain occupies 1453-1528 (CRGERIRDYY…VVKCGCTRCV (76 aa)).

As to quaternary structure, interacts with GREM1. Homodimer. Binds ROBO1 and ROBO2 with high affinity. Fetal lung and kidney, and adult spinal cord. Weak expression in adult adrenal gland, thyroid, trachea and other tissues examined.

The protein localises to the secreted. In terms of biological role, thought to act as molecular guidance cue in cellular migration, and function appears to be mediated by interaction with roundabout homolog receptors. During neural development involved in axonal navigation at the ventral midline of the neural tube and projection of axons to different regions. SLIT1 and SLIT2 seem to be essential for midline guidance in the forebrain by acting as repulsive signal preventing inappropriate midline crossing by axons projecting from the olfactory bulb. In spinal cord development may play a role in guiding commissural axons once they reached the floor plate by modulating the response to netrin. In vitro, silences the attractive effect of NTN1 but not its growth-stimulatory effect and silencing requires the formation of a ROBO1-DCC complex. May be implicated in spinal cord midline post-crossing axon repulsion. In vitro, only commissural axons that crossed the midline responded to SLIT2. In the developing visual system appears to function as repellent for retinal ganglion axons by providing a repulsion that directs these axons along their appropriate paths prior to, and after passage through, the optic chiasm. In vitro, collapses and repels retinal ganglion cell growth cones. Seems to play a role in branching and arborization of CNS sensory axons, and in neuronal cell migration. In vitro, Slit homolog 2 protein N-product, but not Slit homolog 2 protein C-product, repels olfactory bulb (OB) but not dorsal root ganglia (DRG) axons, induces OB growth cones collapse and induces branching of DRG axons. Seems to be involved in regulating leukocyte migration. The protein is Slit homolog 2 protein (SLIT2) of Homo sapiens (Human).